Consider the following 775-residue polypeptide: Protein STRUBBELIG-RECEPTOR FAMILY 1 (775 aa).

Positions 1-31 (MRSMRSGRDNNICFLGFLSFALISLPSLSLA) are cleaved as a signal peptide. Residues 32-314 (LTNPDDVAAI…GKEDSFTSKR (283 aa)) are Extracellular-facing. 6 LRR repeats span residues 101 to 122 (SLKA…TLPV), 123 to 146 (SLQN…SSLK), 147 to 169 (SLSV…FQDL), 171 to 193 (LMIN…MQNL), 195 to 217 (TLTS…QDLP), and 218 to 238 (LKDL…KLLS). Residue Asn-133 is glycosylated (N-linked (GlcNAc...) asparagine). N-linked (GlcNAc...) asparagine glycosylation is found at Asn-181 and Asn-192. An N-linked (GlcNAc...) asparagine glycan is attached at Asn-250. Residues 254 to 308 (APSPSPETPPSPTSPKRPFFGPPSPNASAGHGQAHVRSPPSDHHPSRPTPQGKED) form a disordered region. Pro residues predominate over residues 256–278 (SPSPETPPSPTSPKRPFFGPPSP). Asn-279 carries an N-linked (GlcNAc...) asparagine glycan. A helical transmembrane segment spans residues 315–335 (IIWISILGAFSFVVLALVCLL). The Cytoplasmic segment spans residues 336-775 (CGRKCLRKRE…NGDNQYTGRR (440 aa)). The disordered stretch occupies residues 345-414 (EDSEQLSKPH…VGSESKQESH (70 aa)). Over residues 367 to 379 (RSNASMLPPSNTF) the composition is skewed to polar residues. Positions 380 to 391 (NKDKEARPKERV) are enriched in basic and acidic residues. A Protein kinase domain is found at 478 to 756 (FSHENLIGTG…EVVQDLSDMI (279 aa)).

This sequence belongs to the protein kinase superfamily. Ser/Thr protein kinase family. Expressed in roots, stems, leaves and flowers. Low expression in seedlings and siliques.

It localises to the membrane. Not essential for epidermal patterning and not redundant with STRUBBELIG. The chain is Protein STRUBBELIG-RECEPTOR FAMILY 1 (SRF1) from Arabidopsis thaliana (Mouse-ear cress).